A 481-amino-acid chain; its full sequence is UDP-N-acetylmuramoyl-L-alanyl-D-glutamate--L-lysine ligase (481 aa).

Position 42 (serine 42) interacts with UDP-N-acetyl-alpha-D-muramoyl-L-alanyl-D-glutamate. 118–124 (GTKGKTT) provides a ligand contact to ATP. UDP-N-acetyl-alpha-D-muramoyl-L-alanyl-D-glutamate is bound by residues glutamine 158, 160–161 (TT), serine 187, and arginine 195. Lysine 229 carries the post-translational modification N6-carboxylysine. The L-lysine recognition motif signature appears at 404 to 407 (DDPN).

The protein belongs to the MurCDEF family. MurE subfamily. Post-translationally, carboxylation is probably crucial for Mg(2+) binding and, consequently, for the gamma-phosphate positioning of ATP.

It localises to the cytoplasm. The catalysed reaction is UDP-N-acetyl-alpha-D-muramoyl-L-alanyl-D-glutamate + L-lysine + ATP = UDP-N-acetyl-alpha-D-muramoyl-L-alanyl-gamma-D-glutamyl-L-lysine + ADP + phosphate + H(+). The protein operates within cell wall biogenesis; peptidoglycan biosynthesis. Its function is as follows. Catalyzes the addition of L-lysine to the nucleotide precursor UDP-N-acetylmuramoyl-L-alanyl-D-glutamate (UMAG) in the biosynthesis of bacterial cell-wall peptidoglycan. The protein is UDP-N-acetylmuramoyl-L-alanyl-D-glutamate--L-lysine ligase of Streptococcus pyogenes serotype M6 (strain ATCC BAA-946 / MGAS10394).